Reading from the N-terminus, the 180-residue chain is Inner membrane-spanning protein YciB (180 aa).

The next 5 membrane-spanning stretches (helical) occupy residues 22-42 (IFVA…FTWF), 50-70 (MTLV…AFHS), 72-92 (LFIK…LLVS), 121-141 (MSWA…AFWL), and 149-169 (FKVF…GVYI).

It belongs to the YciB family.

It localises to the cell inner membrane. Plays a role in cell envelope biogenesis, maintenance of cell envelope integrity and membrane homeostasis. The chain is Inner membrane-spanning protein YciB from Yersinia enterocolitica serotype O:8 / biotype 1B (strain NCTC 13174 / 8081).